The following is a 595-amino-acid chain: MLPKFDPTNQKACLSLLEDLTTNVKQIQDSVLEAILSRNAQTEYLRGFLNGQVDKQNFKKNVPVVTYEDIRSYIDRIANGEPSDLICDRPISVLLTSSGTSGGVPKLIPLTTEDLEQRISFSSLYAPLLYKHIDGLSEGKSLIFYFVTRESKTANGLMVRTMVTSFLKSIKQTNSFLWDSLQVSPHAITTCADTTQSMYCQLLCGLLERDNVARLGAPFASSFLKVIKFLEDHWPELCSNIRTGRLSDWITDATCTSGIGKFLTAPNPELASLIEQECSKTSWEAILKRLWPKAKCIESIITGTMAQYIPLLEFYSGGLPLTSSFYGSSECFMGVNFNPLCKPSDVSYTIIPCMGYFEFLEVEKDHQEAGHDPTEKPVVVDLVDVKIGHDYEPVVTTFSGLYRYRVGDVLRATGFYNNAPHFCFVGRQKVVLSIDMDKTYEDDLLKAVTNAKLLLEPHDLMLMDFTSRVDSSSFPGHYVIYWELGSKVKDAKFEPNRDVMEECCFTVEESLDAVYRKGRKNDKNIGPLEIKVVKPGAFDELMNFFLSRGSSVSQYKTPRSVTNEEALKILEANVISEFLSRKIPSWELHELHSGR.

ATP is bound by residues 97 to 98 (SS), Thr302, and 325 to 330 (FYGSSE). Substrate contacts are provided by Phe325 and Phe332. ATP-binding residues include Tyr348 and Asp408.

The protein belongs to the IAA-amido conjugating enzyme family. As to expression, expressed in seedlings, roots, and parts of the siliques.

It catalyses the reaction (indol-3-yl)butanoate + L-cysteine + ATP = (indol-3-yl)butanoyl-L-cysteine + AMP + diphosphate + H(+). The catalysed reaction is (indol-3-yl)butanoate + L-glutamine + ATP = (indol-3-yl)butanoyl-L-glutamine + AMP + diphosphate + H(+). It carries out the reaction 4-(2,4-dichlorophenoxy)butanoate + L-glutamine + ATP = 4-(2,4-dichlorophenoxy)butanoyl-L-glutamine + AMP + diphosphate + H(+). Its function is as follows. Indole-3-acetic acid-amido (IAA) synthetase that catalyzes the conjugation of amino acids to auxin specifically using the auxin precursor indole-3-butyric acid (IBA) and glutamine and, possibly, cysteine as substrates. Displays high catalytic activity with the auxinic phenoxyalkanoic acid herbicides 4-(2,4-dichlorophenoxy)butyric acid (2,4-DB) and to some extent 2,4-dichlorophenoxylacetic acid (2,4-D) as substrates, thus conferring resistance to herbicides. The protein is Indole-3-acetic acid-amido synthetase GH3.15 of Arabidopsis thaliana (Mouse-ear cress).